A 1338-amino-acid polypeptide reads, in one-letter code: P-type sodium-transporting ATPase4 (1338 aa).

The interval 1–106 (MAARASADKL…KSISSVSQMH (106 aa)) is disordered. The segment covering 55–69 (AEEKVAGHDGESPRR) has biased composition (basic and acidic residues). Over residues 91-104 (GHSQLGKSISSVSQ) the composition is skewed to polar residues. 8 helical membrane-spanning segments follow: residues 229–249 (IFIQ…AIAS), 255–275 (WVEG…ATYM), 418–438 (LGGM…VVAI), 456–476 (IVLV…PMVV), 985–1005 (FVCF…IAIA), 1068–1088 (IFEA…CTGV), 1261–1281 (MHLA…VPGI), and 1288–1308 (CALP…NLIL).

Belongs to the cation transport ATPase (P-type) (TC 3.A.3) family.

The protein resides in the cell membrane. It carries out the reaction Na(+)(in) + ATP + H2O = Na(+)(out) + ADP + phosphate + H(+). Inhibited by cipargamin, a synthetic spiroindolone. Inhibited by pyrazoleamide PA21A050, structurally unrelated to the spiroindolones. Inhibited by (+)-SJ733, a dihydroisoquinolone compound. Sodium-exporting ATPase. Required for the extrusion of Na(+) from the parasites to maintain a low cytosolic concentration of Na(+). Required for maintaining the viability of extracellular parasites but not for intracellular growth, egress or invasion. Involved in parasite virulence. The sequence is that of P-type sodium-transporting ATPase4 from Toxoplasma gondii (strain ATCC 50861 / VEG).